The primary structure comprises 312 residues: MKTNYEFRPQYLKDFIGKEQLKNNLKVYLTASKRLENSFDHTLLHGLSGTGKTTLALIIANEMNVNCHITQGNLLNKPIDIINLLSLIKENDVVFIDEIHACGLGAFETLYSVLEDFCIDINIGKDFNSKMTRLKIPHFTLIGATTIFGKIPKSLEERFGHIFHLNEYEPSEISAIILKNNQMHFQIDLNEEEIDLIANNAKGIPRLANRLLKRVVDFKINGFNDIKNIFKKIQIYEFGLDEQDINYLNVLYRQDNEIGLKSIAQILRLDQYTIETKIEPYLIQHHFINKNLRGRKITIEGIDFLKNNQLIK.

The segment at 1-168 is large ATPase domain (RuvB-L); it reads MKTNYEFRPQ…FGHIFHLNEY (168 aa). ATP contacts are provided by residues Arg-8, Gly-49, Lys-52, Thr-53, Thr-54, 115–117, Arg-158, Tyr-168, and Arg-206; that span reads EDF. Position 53 (Thr-53) interacts with Mg(2+). The tract at residues 169 to 234 is small ATPAse domain (RuvB-S); that stretch reads EPSEISAIIL…DIKNIFKKIQ (66 aa). The interval 237–312 is head domain (RuvB-H); it reads EFGLDEQDIN…DFLKNNQLIK (76 aa). DNA is bound by residues Lys-290 and Arg-295.

The protein belongs to the RuvB family. Homohexamer. Forms an RuvA(8)-RuvB(12)-Holliday junction (HJ) complex. HJ DNA is sandwiched between 2 RuvA tetramers; dsDNA enters through RuvA and exits via RuvB. An RuvB hexamer assembles on each DNA strand where it exits the tetramer. Each RuvB hexamer is contacted by two RuvA subunits (via domain III) on 2 adjacent RuvB subunits; this complex drives branch migration. In the full resolvosome a probable DNA-RuvA(4)-RuvB(12)-RuvC(2) complex forms which resolves the HJ.

The protein localises to the cytoplasm. The catalysed reaction is ATP + H2O = ADP + phosphate + H(+). In terms of biological role, the RuvA-RuvB-RuvC complex processes Holliday junction (HJ) DNA during genetic recombination and DNA repair, while the RuvA-RuvB complex plays an important role in the rescue of blocked DNA replication forks via replication fork reversal (RFR). RuvA specifically binds to HJ cruciform DNA, conferring on it an open structure. The RuvB hexamer acts as an ATP-dependent pump, pulling dsDNA into and through the RuvAB complex. RuvB forms 2 homohexamers on either side of HJ DNA bound by 1 or 2 RuvA tetramers; 4 subunits per hexamer contact DNA at a time. Coordinated motions by a converter formed by DNA-disengaged RuvB subunits stimulates ATP hydrolysis and nucleotide exchange. Immobilization of the converter enables RuvB to convert the ATP-contained energy into a lever motion, pulling 2 nucleotides of DNA out of the RuvA tetramer per ATP hydrolyzed, thus driving DNA branch migration. The RuvB motors rotate together with the DNA substrate, which together with the progressing nucleotide cycle form the mechanistic basis for DNA recombination by continuous HJ branch migration. Branch migration allows RuvC to scan DNA until it finds its consensus sequence, where it cleaves and resolves cruciform DNA. This is Holliday junction branch migration complex subunit RuvB from Ureaplasma parvum serovar 3 (strain ATCC 27815 / 27 / NCTC 11736).